A 778-amino-acid chain; its full sequence is NAD-dependent deacetylase sir2B (778 aa).

ANK repeat units follow at residues 83-112, 114-142, 148-178, 191-221, 225-255, 260-289, 317-354, 358-390, and 394-423; these read LNWT…EISI, RYTA…VPNG, DMET…SMNS, HGVS…DINS, DNST…ELMN, YGNS…KIII, DGST…QVNG, GNAT…DPTI, and YGWT…LTNS. Residues 438-458 are disordered; it reads SSTSTSSSSSSSSSSSSSSSS. Positions 465 to 778 constitute a Deacetylase sirtuin-type domain; it reads KEELKLKGIE…DYFNTLFNSF (314 aa). His608 serves as the catalytic Proton acceptor. Cys616, Cys619, Cys642, and Cys647 together coordinate Zn(2+). The disordered stretch occupies residues 727–746; sequence KLKQQQENESGESSNDNDNN. Positions 733–746 are enriched in low complexity; it reads ENESGESSNDNDNN.

The protein belongs to the sirtuin family. Requires Zn(2+) as cofactor.

It carries out the reaction N(6)-acetyl-L-lysyl-[protein] + NAD(+) + H2O = 2''-O-acetyl-ADP-D-ribose + nicotinamide + L-lysyl-[protein]. Its function is as follows. NAD-dependent deacetylase, which plays an important role in the regulation of transcriptional repression. The chain is NAD-dependent deacetylase sir2B (sir2B) from Dictyostelium discoideum (Social amoeba).